The chain runs to 97 residues: Putative pterin-4-alpha-carbinolamine dehydratase (97 aa).

It belongs to the pterin-4-alpha-carbinolamine dehydratase family.

It catalyses the reaction (4aS,6R)-4a-hydroxy-L-erythro-5,6,7,8-tetrahydrobiopterin = (6R)-L-erythro-6,7-dihydrobiopterin + H2O. This Dinoroseobacter shibae (strain DSM 16493 / NCIMB 14021 / DFL 12) protein is Putative pterin-4-alpha-carbinolamine dehydratase.